The primary structure comprises 514 residues: piRNA biogenesis protein EXD1 (514 aa).

In terms of domain architecture, 3'-5' exonuclease spans 30 to 122 (LHAERTWMEK…HGKLCWLQVA (93 aa)). The interval 384–422 (SLNKQATNPQHLPPTEEGETSEDSSNKLICTKSKGSEDQ) is disordered.

The protein belongs to the EXD1 family. As to quaternary structure, homodimer. Component of the PET complex, at least composed of EXD1, PIWIL2, TDRD12 and piRNAs.

It is found in the cytoplasm. In terms of biological role, RNA-binding component of the PET complex, a multiprotein complex required for the processing of piRNAs during spermatogenesis. The piRNA metabolic process mediates the repression of transposable elements during meiosis by forming complexes composed of piRNAs and Piwi proteins and governs the methylation and subsequent repression of transposable elements, preventing their mobilization, which is essential for the germline integrity. The PET complex is required during the secondary piRNAs metabolic process for the PIWIL2 slicing-triggered loading of PIWIL4 piRNAs. In the PET complex, EXD1 probably acts as an RNA adapter. EXD1 is an inactive exonuclease. The polypeptide is piRNA biogenesis protein EXD1 (EXD1) (Homo sapiens (Human)).